The sequence spans 122 residues: Large ribosomal subunit protein uL14 (122 aa).

This sequence belongs to the universal ribosomal protein uL14 family. Part of the 50S ribosomal subunit. Forms a cluster with proteins L3 and L19. In the 70S ribosome, L14 and L19 interact and together make contacts with the 16S rRNA in bridges B5 and B8.

In terms of biological role, binds to 23S rRNA. Forms part of two intersubunit bridges in the 70S ribosome. The chain is Large ribosomal subunit protein uL14 from Phenylobacterium zucineum (strain HLK1).